Reading from the N-terminus, the 358-residue chain is Pyruvate dehydrogenase E1 component subunit alpha (358 aa).

Heterodimer of an alpha and a beta chain. Requires thiamine diphosphate as cofactor.

The enzyme catalyses N(6)-[(R)-lipoyl]-L-lysyl-[protein] + pyruvate + H(+) = N(6)-[(R)-S(8)-acetyldihydrolipoyl]-L-lysyl-[protein] + CO2. Functionally, the pyruvate dehydrogenase complex catalyzes the overall conversion of pyruvate to acetyl-CoA and CO(2). It contains multiple copies of three enzymatic components: pyruvate dehydrogenase (E1), dihydrolipoamide acetyltransferase (E2) and lipoamide dehydrogenase (E3). This chain is Pyruvate dehydrogenase E1 component subunit alpha (pdhA), found in Mycoplasma genitalium (strain ATCC 33530 / DSM 19775 / NCTC 10195 / G37) (Mycoplasmoides genitalium).